A 261-amino-acid chain; its full sequence is Short-chain-enoyl-CoA hydratase (261 aa).

The Nucleophile role is filled by glutamate 114. Glutamate 134 acts as the Proton acceptor in catalysis.

The protein belongs to the enoyl-CoA hydratase/isomerase family. In terms of assembly, homotetramer.

It carries out the reaction a short-chain (3S)-3-hydroxyacyl-CoA = a short-chain (2E)-enoyl-CoA + H2O. Its pathway is lipid metabolism; butanoate metabolism. Its function is as follows. Catalyzes the reversible hydration of crotonyl-CoA. Can also use hexenoyl-CoA but not higher analogs. In Clostridium acetobutylicum (strain ATCC 824 / DSM 792 / JCM 1419 / IAM 19013 / LMG 5710 / NBRC 13948 / NRRL B-527 / VKM B-1787 / 2291 / W), this protein is Short-chain-enoyl-CoA hydratase (crt).